A 486-amino-acid chain; its full sequence is MSIAKWRQKLNKGEVSSLELINQQINRIEEVENTLHSYLYLNHEKARASAIKIDEARAAGEELPPLAGVPFAIKDNLCTKGIPTTCSSKMLEEFIPPYESTVTQRLWKAGGILLGKTNLDEFAMGSSTETSAFGPTKNPWDITRVPGGSSGGSAAAVASGLCTAALGSDTGGSIRQPASFCGVVGLKPTYGRVSRWGLIAFASSLDQVGPFSTNVSDAAEILQVIAGHDPRDSTCLDVPVPKYSDHISESISGLRIGLIKECFDQEGLDLEVKKSVLKAADQLQSLGAELIEVSCPRFTDGIATYYVIAPSEASANLARYDGVKYGYRAKEVDNLSDMTAFTRARGFGSEVQRRILIGTYALSAGYVDAYYRKAQQVRTLIRRDFENAFKNVDILLTPTSPTTAFKSGAHQNDPLAMYLSDLLTIPANLAGLPSISLPCGFDEKALPIGLQLIANVLDETRLLQVAHQYEQAAEIMNSAPESSLIN.

Catalysis depends on charge relay system residues Lys74 and Ser149. Residue Ser173 is the Acyl-ester intermediate of the active site.

Belongs to the amidase family. GatA subfamily. In terms of assembly, heterotrimer of A, B and C subunits.

It carries out the reaction L-glutamyl-tRNA(Gln) + L-glutamine + ATP + H2O = L-glutaminyl-tRNA(Gln) + L-glutamate + ADP + phosphate + H(+). Allows the formation of correctly charged Gln-tRNA(Gln) through the transamidation of misacylated Glu-tRNA(Gln) in organisms which lack glutaminyl-tRNA synthetase. The reaction takes place in the presence of glutamine and ATP through an activated gamma-phospho-Glu-tRNA(Gln). This Prochlorococcus marinus (strain SARG / CCMP1375 / SS120) protein is Glutamyl-tRNA(Gln) amidotransferase subunit A.